We begin with the raw amino-acid sequence, 404 residues long: RING-H2 finger protein ATL11 (404 aa).

Residues 1-36 (MNPKGRTNLNRSIIGGHDHGSILQLLLFLLLLSSHG) form the signal peptide. A helical membrane pass occupies residues 64–84 (AILMIVLVSVFFFLGFFSVYI). The RING-type; atypical zinc-finger motif lies at 144–186 (CSVCLNEFEDDETLRLIPKCCHVFHPGCIDAWLRSHTTCPLCR). Disordered regions lie at residues 339 to 361 (PYRT…VRAS) and 385 to 404 (VGEN…SNTV).

This sequence belongs to the RING-type zinc finger family. ATL subfamily.

The protein resides in the membrane. It catalyses the reaction S-ubiquitinyl-[E2 ubiquitin-conjugating enzyme]-L-cysteine + [acceptor protein]-L-lysine = [E2 ubiquitin-conjugating enzyme]-L-cysteine + N(6)-ubiquitinyl-[acceptor protein]-L-lysine.. Its pathway is protein modification; protein ubiquitination. This chain is RING-H2 finger protein ATL11 (ATL11), found in Arabidopsis thaliana (Mouse-ear cress).